A 148-amino-acid polypeptide reads, in one-letter code: Lysozyme C (148 aa).

Positions 1–18 (MKAVIILGLVLLSVTVQG) are cleaved as a signal peptide. The C-type lysozyme domain maps to 19 to 148 (KIFERCELAR…VSQYVQGCGV (130 aa)). 4 disulfides stabilise this stretch: cysteine 24-cysteine 146, cysteine 48-cysteine 134, cysteine 83-cysteine 99, and cysteine 95-cysteine 113. Catalysis depends on residues glutamate 53 and aspartate 71.

This sequence belongs to the glycosyl hydrolase 22 family. Monomer.

The protein localises to the secreted. It catalyses the reaction Hydrolysis of (1-&gt;4)-beta-linkages between N-acetylmuramic acid and N-acetyl-D-glucosamine residues in a peptidoglycan and between N-acetyl-D-glucosamine residues in chitodextrins.. Functionally, lysozymes have primarily a bacteriolytic function; those in tissues and body fluids are associated with the monocyte-macrophage system and enhance the activity of immunoagents. The chain is Lysozyme C (LYZ) from Papio anubis (Olive baboon).